The primary structure comprises 471 residues: MTTSTPQTMYEKLWQTHLVEATKGETPLLYVDRHLIHEVTSPQAFANLRFHNRPVRHPERTIATMDHNISTRSIKIDAAGEGAANQLRALAINCKDFGIELFDMGHKNQGIAHVIGPELGLTLPGTIIVCGDSHTATHGAFGALAFGIGTSEVEHVFATQTLRQNKAKTMKIEVKGHVGAGISAKDIILAIIGKTGSAGATGYVVEYCGEAIEALSMEERMTVCNMSIEFGAKAGLIAPDQTTFDYVEGKEYAPKGEVFEQAVVDWKNLKSDADAQFDAVLTLDAKDIKAQVTWGTNPGQVISVDGTVPSPEDFSDPVEKESCVSALNYMGLTAGTKMTDIHVNKVFIGSCTNSRIEDLRAAAGVVQKYEGQQVVKTIDAIIVPGSYRVKEQAESEGLDKIFTDAGFEWRLPGCSMCLGMNDDVLEEGDRCASTSNRNFEGRQGRGSRTHLVSPEMAAAAAITGHFVDLNA.

[4Fe-4S] cluster is bound by residues cysteine 351, cysteine 414, and cysteine 417.

Belongs to the aconitase/IPM isomerase family. LeuC type 1 subfamily. Heterodimer of LeuC and LeuD. [4Fe-4S] cluster serves as cofactor.

The catalysed reaction is (2R,3S)-3-isopropylmalate = (2S)-2-isopropylmalate. Its pathway is amino-acid biosynthesis; L-leucine biosynthesis; L-leucine from 3-methyl-2-oxobutanoate: step 2/4. In terms of biological role, catalyzes the isomerization between 2-isopropylmalate and 3-isopropylmalate, via the formation of 2-isopropylmaleate. The protein is 3-isopropylmalate dehydratase large subunit of Colwellia psychrerythraea (strain 34H / ATCC BAA-681) (Vibrio psychroerythus).